The sequence spans 160 residues: Major strawberry allergen Fra a 1-A (160 aa).

Belongs to the BetVI family. In terms of assembly, monomer.

Its function is as follows. May be involved in ripening of fruits. This chain is Major strawberry allergen Fra a 1-A, found in Fragaria ananassa (Strawberry).